The following is a 161-amino-acid chain: Cytochrome c-type biogenesis protein CcmE (161 aa).

Residues 1-8 (MNPVRKKR) are Cytoplasmic-facing. The chain crosses the membrane as a helical; Signal-anchor for type II membrane protein span at residues 9–29 (LYIVLAILCGVSIAVALALTA). At 30-161 (LQENINLFYT…AKGYQQESAQ (132 aa)) the chain is on the periplasmic side. Residues His124 and Tyr128 each contribute to the heme site.

This sequence belongs to the CcmE/CycJ family.

Its subcellular location is the cell inner membrane. Heme chaperone required for the biogenesis of c-type cytochromes. Transiently binds heme delivered by CcmC and transfers the heme to apo-cytochromes in a process facilitated by CcmF and CcmH. The protein is Cytochrome c-type biogenesis protein CcmE of Ectopseudomonas mendocina (strain ymp) (Pseudomonas mendocina).